Reading from the N-terminus, the 367-residue chain is Phosphoribosylaminoimidazole-succinocarboxamide synthase (367 aa).

This sequence belongs to the SAICAR synthetase family.

The enzyme catalyses 5-amino-1-(5-phospho-D-ribosyl)imidazole-4-carboxylate + L-aspartate + ATP = (2S)-2-[5-amino-1-(5-phospho-beta-D-ribosyl)imidazole-4-carboxamido]succinate + ADP + phosphate + 2 H(+). Its pathway is purine metabolism; IMP biosynthesis via de novo pathway; 5-amino-1-(5-phospho-D-ribosyl)imidazole-4-carboxamide from 5-amino-1-(5-phospho-D-ribosyl)imidazole-4-carboxylate: step 1/2. The sequence is that of Phosphoribosylaminoimidazole-succinocarboxamide synthase from Shewanella sp. (strain ANA-3).